A 339-amino-acid chain; its full sequence is UDP-N-acetylenolpyruvoylglucosamine reductase (339 aa).

In terms of domain architecture, FAD-binding PCMH-type spans 16-188 (GIAATARYYS…LQVTLRLNKQ (173 aa)). The active site involves R164. S238 (proton donor) is an active-site residue. E334 is an active-site residue.

The protein belongs to the MurB family. FAD serves as cofactor.

Its subcellular location is the cytoplasm. The catalysed reaction is UDP-N-acetyl-alpha-D-muramate + NADP(+) = UDP-N-acetyl-3-O-(1-carboxyvinyl)-alpha-D-glucosamine + NADPH + H(+). It functions in the pathway cell wall biogenesis; peptidoglycan biosynthesis. Functionally, cell wall formation. This is UDP-N-acetylenolpyruvoylglucosamine reductase from Amoebophilus asiaticus (strain 5a2).